Consider the following 216-residue polypeptide: uncharacterized protein (216 aa).

The protein resides in the plastid. It is found in the chloroplast. This is an uncharacterized protein from Pyropia yezoensis (Susabi-nori).